A 199-amino-acid polypeptide reads, in one-letter code: MLWLALFFGRFSRLEAPQRLVIKKRSDRGQANLPMINERIRFPKIRAIDADGTQLGIMHPRDALRIAEERNLDLVVVSEDAQPPVCRIMDYGKYKFEQEKRAKEARKKQHTADVKEVKMRYTIGEHDYQVRLRDTIRFLKDGDKVKATIMFRGREIQHANLAKDLLMQLAADSAEIGEVQQEPSVEGRNMIMILSPKRT.

This sequence belongs to the IF-3 family. In terms of assembly, monomer.

It is found in the cytoplasm. IF-3 binds to the 30S ribosomal subunit and shifts the equilibrium between 70S ribosomes and their 50S and 30S subunits in favor of the free subunits, thus enhancing the availability of 30S subunits on which protein synthesis initiation begins. The chain is Translation initiation factor IF-3 from Gloeobacter violaceus (strain ATCC 29082 / PCC 7421).